A 62-amino-acid chain; its full sequence is Alkaline proteinase (62 aa).

Residues Gly1 to Ser62 form the Peptidase S8 domain. The active-site Charge relay system is Asp21.

The protein localises to the secreted. With respect to regulation, inhibited by phenylmethanesulfonyl fluoride (PMSF) and chymostatin (CST), but not by Bowman-Birk type trypsin-chymotrypsin inhibitor (BBI). In terms of biological role, serine protease. May be involved in the invasion of grains and hydrolysis of grain proteins. The protein is Alkaline proteinase of Fusarium culmorum.